A 377-amino-acid polypeptide reads, in one-letter code: Chaperone protein DnaJ (377 aa).

One can recognise a J domain in the interval 5-70 (DYYEVLGVSR…DKKAAYDQFG (66 aa)). A CR-type zinc finger spans residues 133–211 (GLTKELRIPT…CHGDGRVEKS (79 aa)). 8 residues coordinate Zn(2+): Cys-146, Cys-149, Cys-163, Cys-166, Cys-185, Cys-188, Cys-199, and Cys-202. CXXCXGXG motif repeat units lie at residues 146 to 153 (CDLCEGSG), 163 to 170 (CGTCHGQG), 185 to 192 (CPTCHGRG), and 199 to 206 (CTKCHGDG).

The protein belongs to the DnaJ family. As to quaternary structure, homodimer. Zn(2+) serves as cofactor.

It localises to the cytoplasm. Functionally, participates actively in the response to hyperosmotic and heat shock by preventing the aggregation of stress-denatured proteins and by disaggregating proteins, also in an autonomous, DnaK-independent fashion. Unfolded proteins bind initially to DnaJ; upon interaction with the DnaJ-bound protein, DnaK hydrolyzes its bound ATP, resulting in the formation of a stable complex. GrpE releases ADP from DnaK; ATP binding to DnaK triggers the release of the substrate protein, thus completing the reaction cycle. Several rounds of ATP-dependent interactions between DnaJ, DnaK and GrpE are required for fully efficient folding. Also involved, together with DnaK and GrpE, in the DNA replication of plasmids through activation of initiation proteins. The polypeptide is Chaperone protein DnaJ (Shewanella baltica (strain OS223)).